We begin with the raw amino-acid sequence, 258 residues long: Hydroxypyruvate isomerase (258 aa).

Catalysis depends on proton donor/acceptor residues E143 and E240.

This sequence belongs to the hyi family. In terms of assembly, homodimer.

The catalysed reaction is 3-hydroxypyruvate = 2-hydroxy-3-oxopropanoate. Not stimulated by addition of pyridoxal 5'-phosphate (0.1 mM), FAD, NAD(+), NADP(+) or ATP (1 mM each). EDTA (10 mM) and metal ions (1 mM) such as Ca(2+), Co(2+), Mg(2+), Ni(2+), Zn(2+) do not affect the enzyme activity. Catalyzes the reversible isomerization between hydroxypyruvate and 2-hydroxy-3-oxopropanoate (also termed tartronate semialdehyde). Does not catalyze the isomerization of D-fructose to D-glucose or that of D-xylulose to D-xylose. Also does not catalyze racemization of serine, alanine, glycerate or lactate. This Escherichia coli (strain K12) protein is Hydroxypyruvate isomerase (hyi).